Here is a 217-residue protein sequence, read N- to C-terminus: tRNA (guanine-N(7)-)-methyltransferase (217 aa).

4 residues coordinate S-adenosyl-L-methionine: E48, E73, N100, and D123. D123 is a catalytic residue. The substrate site is built by K127 and D159.

Belongs to the class I-like SAM-binding methyltransferase superfamily. TrmB family.

It catalyses the reaction guanosine(46) in tRNA + S-adenosyl-L-methionine = N(7)-methylguanosine(46) in tRNA + S-adenosyl-L-homocysteine. It functions in the pathway tRNA modification; N(7)-methylguanine-tRNA biosynthesis. Functionally, catalyzes the formation of N(7)-methylguanine at position 46 (m7G46) in tRNA. The protein is tRNA (guanine-N(7)-)-methyltransferase of Leptospira interrogans serogroup Icterohaemorrhagiae serovar Lai (strain 56601).